Consider the following 316-residue polypeptide: MTQGKLSVANKAPGTEGQQQVHGEKKEAPAVPSAPPSYEEATSGEGMKAGAFPPAPTAVPLHPSWAYVDPSSSSSYDNGFPTGDHELFTTFSWDDQKVRRVFVRKVYTILLIQLLVTLAVVALFTFCDPVKDYVQANPGWYWASYAVFFATYLTLACCSGPRRHFPWNLILLTVFTLSMAYLTGMLSSYYNTTSVLLCLGITALVCLSVTVFSFQTKFDFTSCQGVLFVLPMTLFFSGLILAILLPFQYVPWLHAVYAALGAGVFTLFLALDTQLLMGNRRHSLSPEEYIFGALNIYLDIIYIFTFFLQLFGTNRE.

Residues 1-53 (MTQGKLSVANKAPGTEGQQQVHGEKKEAPAVPSAPPSYEEATSGEGMKAGAFP) form a disordered region. Helical transmembrane passes span 106–126 (VYTI…LFTF), 138–158 (PGWY…LACC), and 165–185 (FPWN…LTGM). Asn-191 carries an N-linked (GlcNAc...) asparagine glycan. A run of 4 helical transmembrane segments spans residues 194 to 214 (SVLL…VFSF), 225 to 245 (GVLF…AILL), 250 to 270 (VPWL…LFLA), and 290 to 310 (IFGA…FLQL).

The protein belongs to the BI1 family. LFG subfamily. As to quaternary structure, interacts with FAS/TNFRSF6 and BAX.

It is found in the cell membrane. Its subcellular location is the membrane raft. It localises to the postsynaptic cell membrane. Functionally, antiapoptotic protein which protects cells uniquely from Fas-induced apoptosis. Regulates Fas-mediated apoptosis in neurons by interfering with caspase-8 activation. Plays a role in cerebellar development by affecting cerebellar size, internal granular layer (IGL) thickness, and Purkinje cell (PC) development. The sequence is that of Protein lifeguard 2 (FAIM2) from Pongo abelii (Sumatran orangutan).